A 241-amino-acid chain; its full sequence is ATP synthase subunit a (241 aa).

The next 5 membrane-spanning stretches (helical) occupy residues 30–50 (GQVF…VVVG), 91–111 (FIGT…LVPW), 128–148 (INTT…AGLS), 193–213 (LVVA…VMFL), and 214–234 (GLFT…YYIG).

This sequence belongs to the ATPase A chain family. In terms of assembly, F-type ATPases have 2 components, CF(1) - the catalytic core - and CF(0) - the membrane proton channel. CF(1) has five subunits: alpha(3), beta(3), gamma(1), delta(1), epsilon(1). CF(0) has four main subunits: a, b, b' and c.

It is found in the cellular thylakoid membrane. Functionally, key component of the proton channel; it plays a direct role in the translocation of protons across the membrane. The chain is ATP synthase subunit a from Prochlorococcus marinus (strain MIT 9303).